Here is an 874-residue protein sequence, read N- to C-terminus: Alanine--tRNA ligase (874 aa).

Residues His564, His568, Cys666, and His670 each contribute to the Zn(2+) site.

The protein belongs to the class-II aminoacyl-tRNA synthetase family. Requires Zn(2+) as cofactor.

The protein resides in the cytoplasm. The enzyme catalyses tRNA(Ala) + L-alanine + ATP = L-alanyl-tRNA(Ala) + AMP + diphosphate. Its function is as follows. Catalyzes the attachment of alanine to tRNA(Ala) in a two-step reaction: alanine is first activated by ATP to form Ala-AMP and then transferred to the acceptor end of tRNA(Ala). Also edits incorrectly charged Ser-tRNA(Ala) and Gly-tRNA(Ala) via its editing domain. The sequence is that of Alanine--tRNA ligase from Carboxydothermus hydrogenoformans (strain ATCC BAA-161 / DSM 6008 / Z-2901).